A 182-amino-acid polypeptide reads, in one-letter code: Ribulose bisphosphate carboxylase small subunit, chloroplastic (182 aa).

Residues 1-58 constitute a chloroplast transit peptide; sequence MASSMISSATVATVSRATPAQATMVAPFTGLKSTAAFPATRKSNNDITSLASNGGRVQ.

This sequence belongs to the RuBisCO small chain family. Heterohexadecamer of 8 large and 8 small subunits.

The protein localises to the plastid. The protein resides in the chloroplast. RuBisCO catalyzes two reactions: the carboxylation of D-ribulose 1,5-bisphosphate, the primary event in carbon dioxide fixation, as well as the oxidative fragmentation of the pentose substrate. Both reactions occur simultaneously and in competition at the same active site. Although the small subunit is not catalytic it is essential for maximal activity. This chain is Ribulose bisphosphate carboxylase small subunit, chloroplastic, found in Fagus crenata (Japanese beech).